Consider the following 158-residue polypeptide: NAD(P)H-quinone oxidoreductase subunit J, chloroplastic (158 aa).

This sequence belongs to the complex I 30 kDa subunit family. As to quaternary structure, NDH is composed of at least 16 different subunits, 5 of which are encoded in the nucleus.

Its subcellular location is the plastid. It localises to the chloroplast thylakoid membrane. It carries out the reaction a plastoquinone + NADH + (n+1) H(+)(in) = a plastoquinol + NAD(+) + n H(+)(out). The catalysed reaction is a plastoquinone + NADPH + (n+1) H(+)(in) = a plastoquinol + NADP(+) + n H(+)(out). In terms of biological role, NDH shuttles electrons from NAD(P)H:plastoquinone, via FMN and iron-sulfur (Fe-S) centers, to quinones in the photosynthetic chain and possibly in a chloroplast respiratory chain. The immediate electron acceptor for the enzyme in this species is believed to be plastoquinone. Couples the redox reaction to proton translocation, and thus conserves the redox energy in a proton gradient. This is NAD(P)H-quinone oxidoreductase subunit J, chloroplastic from Eucalyptus globulus subsp. globulus (Tasmanian blue gum).